Reading from the N-terminus, the 286-residue chain is MQHPDSILTLLKKSEEFLKKKEIPSARLDAEILLADLLNLQRVKLYVNFERLLNETEKNAYRERILERSKNKPTAYITSQKAFYNSIFFVNENVLIPRPETEELVEKVLSDFKGNIGEQNVLDLCTGSGCIGISLKLARKDWNITLSDISKEALEVATKNAIQILGEEKHIQFLESDLFLSIPKESKFNLIVTNPPYIPISDKAEMMKDVIDYEPHLALFLENPKDFLSTLIAQAYERLVEGGKLYMEILPSLSETIISDSIAKGWENGKIEKDLSGKERFVILTR.

S-adenosyl-L-methionine-binding residues include D148 and N194. 194–197 (NPPY) contacts substrate.

The protein belongs to the protein N5-glutamine methyltransferase family. PrmC subfamily.

The enzyme catalyses L-glutaminyl-[peptide chain release factor] + S-adenosyl-L-methionine = N(5)-methyl-L-glutaminyl-[peptide chain release factor] + S-adenosyl-L-homocysteine + H(+). In terms of biological role, methylates the class 1 translation termination release factors RF1/PrfA and RF2/PrfB on the glutamine residue of the universally conserved GGQ motif. The protein is Release factor glutamine methyltransferase of Leptospira interrogans serogroup Icterohaemorrhagiae serovar Lai (strain 56601).